We begin with the raw amino-acid sequence, 422 residues long: tRNA(Met) cytidine acetate ligase (422 aa).

Residues 7-20, Gly-102, Asn-172, and Arg-197 each bind ATP; that span reads ITEY…HLYH.

This sequence belongs to the TmcAL family.

The protein resides in the cytoplasm. It carries out the reaction cytidine(34) in elongator tRNA(Met) + acetate + ATP = N(4)-acetylcytidine(34) in elongator tRNA(Met) + AMP + diphosphate. Its function is as follows. Catalyzes the formation of N(4)-acetylcytidine (ac(4)C) at the wobble position of elongator tRNA(Met), using acetate and ATP as substrates. First activates an acetate ion to form acetyladenylate (Ac-AMP) and then transfers the acetyl group to tRNA to form ac(4)C34. This Halothermothrix orenii (strain H 168 / OCM 544 / DSM 9562) protein is tRNA(Met) cytidine acetate ligase.